A 266-amino-acid chain; its full sequence is 4-hydroxy-tetrahydrodipicolinate reductase (266 aa).

10 to 15 contributes to the NAD(+) binding site; it reads GPRGRM. K38 serves as a coordination point for NADP(+). NAD(+) contacts are provided by residues 99 to 101 and 125 to 128; these read GTT and APNF. H155 (proton donor/acceptor) is an active-site residue. H156 is a (S)-2,3,4,5-tetrahydrodipicolinate binding site. K159 functions as the Proton donor in the catalytic mechanism. 165–166 lines the (S)-2,3,4,5-tetrahydrodipicolinate pocket; the sequence is GT.

Belongs to the DapB family.

The protein localises to the cytoplasm. It catalyses the reaction (S)-2,3,4,5-tetrahydrodipicolinate + NAD(+) + H2O = (2S,4S)-4-hydroxy-2,3,4,5-tetrahydrodipicolinate + NADH + H(+). It carries out the reaction (S)-2,3,4,5-tetrahydrodipicolinate + NADP(+) + H2O = (2S,4S)-4-hydroxy-2,3,4,5-tetrahydrodipicolinate + NADPH + H(+). It functions in the pathway amino-acid biosynthesis; L-lysine biosynthesis via DAP pathway; (S)-tetrahydrodipicolinate from L-aspartate: step 4/4. Functionally, catalyzes the conversion of 4-hydroxy-tetrahydrodipicolinate (HTPA) to tetrahydrodipicolinate. In Bacillus cereus (strain Q1), this protein is 4-hydroxy-tetrahydrodipicolinate reductase.